A 637-amino-acid polypeptide reads, in one-letter code: Sec1 family domain-containing protein 1 (637 aa).

Phosphoserine occurs at positions 32, 298, and 523.

This sequence belongs to the STXBP/unc-18/SEC1 family. In terms of assembly, interacts with STX17. Interacts with the COG complex via COG4. Interacts with STX5A. As to expression, highly expressed in testis. Detected at lower levels in brain, astrocytes, heart and small intestine.

The protein resides in the cytoplasm. The protein localises to the endoplasmic reticulum membrane. It is found in the golgi apparatus. It localises to the golgi stack membrane. Its function is as follows. Plays a role in SNARE-pin assembly and Golgi-to-ER retrograde transport via its interaction with COG4. Involved in vesicular transport between the endoplasmic reticulum and the Golgi. In Rattus norvegicus (Rat), this protein is Sec1 family domain-containing protein 1 (Scfd1).